We begin with the raw amino-acid sequence, 657 residues long: Glycogen debranching enzyme (657 aa).

Aspartate 336 serves as the catalytic Nucleophile. Glutamate 371 (proton donor) is an active-site residue. The segment covering 458–467 (NEANGEENRD) has biased composition (basic and acidic residues). Residues 458-479 (NEANGEENRDGTNNNYSNNHGK) form a disordered region.

The protein belongs to the glycosyl hydrolase 13 family.

The enzyme catalyses Hydrolysis of (1-&gt;6)-alpha-D-glucosidic linkages to branches with degrees of polymerization of three or four glucose residues in limit dextrin.. The protein operates within glycan degradation; glycogen degradation. Its function is as follows. Removes maltotriose and maltotetraose chains that are attached by 1,6-alpha-linkage to the limit dextrin main chain, generating a debranched limit dextrin. This is Glycogen debranching enzyme from Escherichia coli (strain K12 / DH10B).